Here is a 358-residue protein sequence, read N- to C-terminus: Uptake hydrogenase small subunit (358 aa).

An N-terminal signal peptide occupies residues 1–45 (MSDIETFYDVMRRQGITRRSFMKSVRSPQHVLGLGPSFVPKIGEA). Residues C62, C65, C160, C194, H232, C235, C260, and C266 each coordinate [4Fe-4S] cluster. 3 residues coordinate [3Fe-4S] cluster: C275, C294, and C297.

It belongs to the [NiFe]/[NiFeSe] hydrogenase small subunit family. Heterodimer of a large and a small subunit. [4Fe-4S] cluster serves as cofactor. [3Fe-4S] cluster is required as a cofactor.

The protein localises to the cell membrane. It catalyses the reaction H2 + A = AH2. Functionally, this enzyme recycles the H(2) produced by nitrogenase to increase the production of ATP and to protect nitrogenase against inhibition or damage by O(2) under carbon- or phosphate-limited conditions. This is Uptake hydrogenase small subunit (hupA) from Rhodobacter capsulatus (Rhodopseudomonas capsulata).